A 2287-amino-acid polypeptide reads, in one-letter code: Protein Ycf2 (2287 aa).

1632-1639 (GSIGTGRS) is a binding site for ATP.

Belongs to the Ycf2 family.

Its subcellular location is the plastid. It localises to the chloroplast stroma. Probable ATPase of unknown function. Its presence in a non-photosynthetic plant (Epifagus virginiana) and experiments in tobacco indicate that it has an essential function which is probably not related to photosynthesis. In Calycanthus floridus var. glaucus (Eastern sweetshrub), this protein is Protein Ycf2.